The following is a 940-amino-acid chain: Alanine--tRNA ligase (940 aa).

Residues histidine 581, histidine 585, cysteine 683, and histidine 687 each coordinate Zn(2+).

The protein belongs to the class-II aminoacyl-tRNA synthetase family. Zn(2+) is required as a cofactor.

It localises to the cytoplasm. It carries out the reaction tRNA(Ala) + L-alanine + ATP = L-alanyl-tRNA(Ala) + AMP + diphosphate. Its function is as follows. Catalyzes the attachment of alanine to tRNA(Ala) in a two-step reaction: alanine is first activated by ATP to form Ala-AMP and then transferred to the acceptor end of tRNA(Ala). Also edits incorrectly charged Ser-tRNA(Ala) and Gly-tRNA(Ala) via its editing domain. This Leptospira borgpetersenii serovar Hardjo-bovis (strain L550) protein is Alanine--tRNA ligase.